A 77-amino-acid polypeptide reads, in one-letter code: Sec-independent protein translocase protein TatA (77 aa).

Residues 1-21 form a helical membrane-spanning segment; sequence MGSFSIWHWLVVLAIVVLVFG. The interval 40–77 is disordered; the sequence is KEGMKGAEEENTQPPPSHQQVTGHSIKSEIEEKDQTKV. Positions 65–77 are enriched in basic and acidic residues; sequence IKSEIEEKDQTKV.

It belongs to the TatA/E family. In terms of assembly, the Tat system comprises two distinct complexes: a TatABC complex, containing multiple copies of TatA, TatB and TatC subunits, and a separate TatA complex, containing only TatA subunits. Substrates initially bind to the TatABC complex, which probably triggers association of the separate TatA complex to form the active translocon.

The protein localises to the cell inner membrane. Its function is as follows. Part of the twin-arginine translocation (Tat) system that transports large folded proteins containing a characteristic twin-arginine motif in their signal peptide across membranes. TatA could form the protein-conducting channel of the Tat system. The polypeptide is Sec-independent protein translocase protein TatA (Nitrosomonas eutropha (strain DSM 101675 / C91 / Nm57)).